The following is a 236-amino-acid chain: Urease accessory protein UreG 2 (236 aa).

Positions 1–40 are disordered; it reads MEASVHIGNSVPHAHLHSAAPARPADPVRPDGSRRALRIG. Residue 43-50 participates in GTP binding; sequence GPVGSGKT.

It belongs to the SIMIBI class G3E GTPase family. UreG subfamily. Homodimer. UreD, UreF and UreG form a complex that acts as a GTP-hydrolysis-dependent molecular chaperone, activating the urease apoprotein by helping to assemble the nickel containing metallocenter of UreC. The UreE protein probably delivers the nickel.

It localises to the cytoplasm. Facilitates the functional incorporation of the urease nickel metallocenter. This process requires GTP hydrolysis, probably effectuated by UreG. The chain is Urease accessory protein UreG 2 from Saccharopolyspora erythraea (strain ATCC 11635 / DSM 40517 / JCM 4748 / NBRC 13426 / NCIMB 8594 / NRRL 2338).